A 145-amino-acid chain; its full sequence is Ribonuclease P protein component (145 aa).

The interval 121 to 145 (PAAAGTMPPARTVHPSSLSPTEPEL) is disordered. The span at 134–145 (HPSSLSPTEPEL) shows a compositional bias: polar residues.

Belongs to the RnpA family. In terms of assembly, consists of a catalytic RNA component (M1 or rnpB) and a protein subunit.

It catalyses the reaction Endonucleolytic cleavage of RNA, removing 5'-extranucleotides from tRNA precursor.. Functionally, RNaseP catalyzes the removal of the 5'-leader sequence from pre-tRNA to produce the mature 5'-terminus. It can also cleave other RNA substrates such as 4.5S RNA. The protein component plays an auxiliary but essential role in vivo by binding to the 5'-leader sequence and broadening the substrate specificity of the ribozyme. This chain is Ribonuclease P protein component, found in Xanthomonas axonopodis pv. citri (strain 306).